The primary structure comprises 143 residues: S-adenosylmethionine decarboxylase proenzyme (143 aa).

S66 serves as the catalytic Schiff-base intermediate with substrate; via pyruvic acid. At S66 the chain carries Pyruvic acid (Ser); by autocatalysis. The active-site Proton acceptor; for processing activity is the H71. The active-site Proton donor; for catalytic activity is C86.

It belongs to the prokaryotic AdoMetDC family. Type 1 subfamily. As to quaternary structure, heterotetramer of two alpha and two beta chains arranged as a dimer of alpha/beta heterodimers. It depends on pyruvate as a cofactor. Is synthesized initially as an inactive proenzyme. Formation of the active enzyme involves a self-maturation process in which the active site pyruvoyl group is generated from an internal serine residue via an autocatalytic post-translational modification. Two non-identical subunits are generated from the proenzyme in this reaction, and the pyruvate is formed at the N-terminus of the alpha chain, which is derived from the carboxyl end of the proenzyme. The post-translation cleavage follows an unusual pathway, termed non-hydrolytic serinolysis, in which the side chain hydroxyl group of the serine supplies its oxygen atom to form the C-terminus of the beta chain, while the remainder of the serine residue undergoes an oxidative deamination to produce ammonia and the pyruvoyl group blocking the N-terminus of the alpha chain.

The catalysed reaction is S-adenosyl-L-methionine + H(+) = S-adenosyl 3-(methylsulfanyl)propylamine + CO2. The protein operates within amine and polyamine biosynthesis; S-adenosylmethioninamine biosynthesis; S-adenosylmethioninamine from S-adenosyl-L-methionine: step 1/1. Functionally, catalyzes the decarboxylation of S-adenosylmethionine to S-adenosylmethioninamine (dcAdoMet), the propylamine donor required for the synthesis of the polyamines spermine and spermidine from the diamine putrescine. The protein is S-adenosylmethionine decarboxylase proenzyme of Thermococcus gammatolerans (strain DSM 15229 / JCM 11827 / EJ3).